The following is a 552-amino-acid chain: MDIKRTVLWVIFFMSAVMLFDNWQRDHGRPSMFFPSATPTRTVGSAAPGTTTPGTQPADLPATNAAAPGNAPAATQSQLIKFNTDVYSGEIDTRGGTLSKLSLVKQGDGKQPDLVITLFDRTANHTYLARTGLLGGDFPNHNDIYTPLPNQPHDLTGDEKSFQISFESPVKGGVKVIKTYTFTRGSYVIGVDTKIQNVGTTPVSPSVYMELVRDDQPVETPRFSHTFIGPAVYTDQHHFQKMTFGDIDKNKQDYATSADNGWIAMVQHYFASAWIPQQGAKRDIYVEKIDPALYRVGVKEPVPTIAPGQTVDVSARLFAGPEEERMLEGIAPGLELVKDYGWVTIIAKPLFWLLEKIHSYVGNWGWSIVLLTLLIKAVFFPLSAASYKSMARMKAITPRMQALRERFKGDPQKMNSALMELYKTEKVNPFGGCLPVVIQIPVFISLYWVLLSSVEMRGAPWILWIHDLSQQDPFFILPVLMAVSMFLQTKLNPTPPDPVQAKMMMFMPIAFSVMFFFFPAGLVLYYVVNNVLSIAQQYYITRMMGQAKTKAA.

A helical transmembrane segment spans residues 3-23 (IKRTVLWVIFFMSAVMLFDNW). The segment at 36-59 (SATPTRTVGSAAPGTTTPGTQPAD) is disordered. Positions 42 to 59 (TVGSAAPGTTTPGTQPAD) are enriched in low complexity. 3 consecutive transmembrane segments (helical) span residues 364 to 384 (WGWSIVLLTLLIKAVFFPLSA), 430 to 450 (FGGCLPVVIQIPVFISLYWVL), and 504 to 524 (MMFMPIAFSVMFFFFPAGLVL).

The protein belongs to the OXA1/ALB3/YidC family. Type 1 subfamily. Interacts with the Sec translocase complex via SecD. Specifically interacts with transmembrane segments of nascent integral membrane proteins during membrane integration.

Its subcellular location is the cell inner membrane. Its function is as follows. Required for the insertion and/or proper folding and/or complex formation of integral membrane proteins into the membrane. Involved in integration of membrane proteins that insert both dependently and independently of the Sec translocase complex, as well as at least some lipoproteins. Aids folding of multispanning membrane proteins. This Paraburkholderia xenovorans (strain LB400) protein is Membrane protein insertase YidC.